The following is a 418-amino-acid chain: ATP-dependent Clp protease ATP-binding subunit ClpX (418 aa).

Positions 1-54 constitute a ClpX-type ZB domain; sequence MTRKDDESDQFFCSFCGKNQKEVKKLIAGPSVYICNECVSLCEEIIEDEDKESL. 4 residues coordinate Zn(2+): C13, C16, C35, and C38. 120–127 contacts ATP; sequence PTGCGKTL.

Belongs to the ClpX chaperone family. In terms of assembly, component of the ClpX-ClpP complex. Forms a hexameric ring that, in the presence of ATP, binds to fourteen ClpP subunits assembled into a disk-like structure with a central cavity, resembling the structure of eukaryotic proteasomes.

Functionally, ATP-dependent specificity component of the Clp protease. It directs the protease to specific substrates. Can perform chaperone functions in the absence of ClpP. This chain is ATP-dependent Clp protease ATP-binding subunit ClpX, found in Desulforapulum autotrophicum (strain ATCC 43914 / DSM 3382 / VKM B-1955 / HRM2) (Desulfobacterium autotrophicum).